Here is a 160-residue protein sequence, read N- to C-terminus: UPF0260 protein Rleg2_0895 (160 aa).

This sequence belongs to the UPF0260 family.

The polypeptide is UPF0260 protein Rleg2_0895 (Rhizobium leguminosarum bv. trifolii (strain WSM2304)).